The sequence spans 373 residues: tRNA-specific 2-thiouridylase MnmA (373 aa).

ATP contacts are provided by residues 12 to 19 and M38; that span reads GMSGGVDS. The interval 98-100 is interaction with target base in tRNA; that stretch reads NPD. Residue C103 is the Nucleophile of the active site. A disulfide bridge links C103 with C200. G127 serves as a coordination point for ATP. The segment at 150–152 is interaction with tRNA; it reads KDQ. Residue C200 is the Cysteine persulfide intermediate of the active site. Residues 312–313 form an interaction with tRNA region; it reads RY.

It belongs to the MnmA/TRMU family.

It is found in the cytoplasm. The enzyme catalyses S-sulfanyl-L-cysteinyl-[protein] + uridine(34) in tRNA + AH2 + ATP = 2-thiouridine(34) in tRNA + L-cysteinyl-[protein] + A + AMP + diphosphate + H(+). Its function is as follows. Catalyzes the 2-thiolation of uridine at the wobble position (U34) of tRNA, leading to the formation of s(2)U34. The protein is tRNA-specific 2-thiouridylase MnmA of Streptococcus sanguinis (strain SK36).